Reading from the N-terminus, the 69-residue chain is Putative defensin-like protein 312 (69 aa).

Positions 1 to 19 are cleaved as a signal peptide; sequence MSCFSFLVYFLLFIVTKMS. Cysteine 45 and cysteine 57 are joined by a disulfide.

The protein belongs to the DEFL family.

It is found in the secreted. In Arabidopsis thaliana (Mouse-ear cress), this protein is Putative defensin-like protein 312.